The sequence spans 215 residues: Beta-crystallin A3 (215 aa).

An N-acetylmethionine modification is found at methionine 1. The disordered stretch occupies residues 1–24 (METQTVQQELESLPTTKMAQTNPM). The segment at 1–30 (METQTVQQELESLPTTKMAQTNPMPGSVGP) is N-terminal arm. Residue glutamate 2 is modified to N-acetylalanine. 2 Beta/gamma crystallin 'Greek key' domains span residues 31–70 (WKITIYDQENFQGKRMEFTSSCPNVSERNFDNVRSLKVEC) and 71–117 (GAWV…RPIC). S-glutathionyl cysteine; alternate occurs at positions 82 and 117. S-methylcysteine; alternate occurs at positions 82 and 117. The tract at residues 118–123 (SANHKE) is connecting peptide. 2 Beta/gamma crystallin 'Greek key' domains span residues 124-165 (SKIT…KIQC) and 166-214 (GAWV…RRIQ).

It belongs to the beta/gamma-crystallin family. In terms of assembly, homo/heterodimer, or complexes of higher-order. The structure of beta-crystallin oligomers seems to be stabilized through interactions between the N-terminal arms. Interacts with CRYBA1. In terms of processing, specific cleavages in the N-terminal arm occur during lens maturation and give rise to several truncated forms. Isoform A1 contains a N-acetylalanine at position 2.

In terms of biological role, crystallins are the dominant structural components of the vertebrate eye lens. The polypeptide is Beta-crystallin A3 (Bos taurus (Bovine)).